A 38-amino-acid polypeptide reads, in one-letter code: Antifungal protein 5 (38 aa).

Belongs to the plant LTP family.

Its function is as follows. Possesses potent antifungal activity against F.graminearum but not P.infestans. The sequence is that of Antifungal protein 5 from Malva parviflora (Little mallow).